The sequence spans 352 residues: tRNA uridine(34) hydroxylase (352 aa).

One can recognise a Rhodanese domain in the interval 144 to 238; sequence SDPDVILIDT…YLEEVPASDS (95 aa). Cysteine 198 acts as the Cysteine persulfide intermediate in catalysis.

It belongs to the TrhO family.

It catalyses the reaction uridine(34) in tRNA + AH2 + O2 = 5-hydroxyuridine(34) in tRNA + A + H2O. Functionally, catalyzes oxygen-dependent 5-hydroxyuridine (ho5U) modification at position 34 in tRNAs. This chain is tRNA uridine(34) hydroxylase, found in Psychrobacter arcticus (strain DSM 17307 / VKM B-2377 / 273-4).